Reading from the N-terminus, the 321-residue chain is Glucokinase (321 aa).

8–13 (GDVGGT) is an ATP binding site.

The protein belongs to the bacterial glucokinase family.

Its subcellular location is the cytoplasm. The catalysed reaction is D-glucose + ATP = D-glucose 6-phosphate + ADP + H(+). In Salmonella schwarzengrund (strain CVM19633), this protein is Glucokinase.